Consider the following 436-residue polypeptide: G2/mitotic-specific cyclin-B (436 aa).

Positions 1 to 17 (MSTINNPLNIKTRSHSS) are enriched in polar residues. Residues 1-33 (MSTINNPLNIKTRSHSSMGGGMIMDENKVPKSS) form a disordered region.

It belongs to the cyclin family. Cyclin AB subfamily. Interacts with the cdk1 protein kinase to form a serine/threonine kinase holoenzyme complex also known as maturation promoting factor (MPF). The cyclin subunit imparts substrate specificity to the complex.

Functionally, essential for the control of the cell cycle at the G2/M (mitosis) transition. This is G2/mitotic-specific cyclin-B (cycB) from Dictyostelium discoideum (Social amoeba).